The sequence spans 365 residues: Prostaglandin E2 receptor EP3 subtype (365 aa).

Residues 1 to 30 (MAGVWAPEHSVEAHSNQSSAADGCGSVSVA) are Extracellular-facing. A glycan (N-linked (GlcNAc...) asparagine) is linked at Asn16. The helical transmembrane segment at 31 to 55 (FPITMMVTGFVGNALAMLLVVRSYR) threads the bilayer. At 56-68 (RRESKRKKSFLLC) the chain is on the cytoplasmic side. Residues 69 to 89 (IGWLALTDLVGQLLTSPVVIL) form a helical membrane-spanning segment. The Extracellular portion of the chain corresponds to 90-108 (VYLSQRRWEQLDPSGRLCT). Cys107 and Cys184 form a disulfide bridge. The helical transmembrane segment at 109–130 (FFGLTMTVFGLSSLLVASAMAV) threads the bilayer. Residues 131 to 151 (ERALAIRAPHWYASHMKTRAT) lie on the Cytoplasmic side of the membrane. A helical membrane pass occupies residues 152–173 (PVLLGVWLSVLAFALLPVLGVG). The Extracellular segment spans residues 174–203 (RYSVQWPGTWCFISTGPAGNETDSAREPGS). Asn193 is a glycosylation site (N-linked (GlcNAc...) asparagine). Residues 204-229 (VAFASAFACLGLLALVVTFACNLATI) form a helical membrane-spanning segment. The Cytoplasmic portion of the chain corresponds to 230 to 259 (KALVSRCRAKAAASQSSAQWGRITTETAIQ). Residues 260–283 (LMGIMCVLSVCWSPLLIMMLKMIF) form a helical membrane-spanning segment. The Extracellular portion of the chain corresponds to 284–303 (NQMSVEQCKTQMGKEKECNS). A helical membrane pass occupies residues 304-325 (FLIAVRLASLNQILDPWVYLLL). Over 326–365 (RKILLRKFCQIRDHTNYASSSTSLPCPGSSVLMWSDQLER) the chain is Cytoplasmic.

The protein belongs to the G-protein coupled receptor 1 family. Interacts (via C-terminus) with MKLN1. In terms of assembly, does not interact with MKLN1. In terms of tissue distribution, principally expressed in the tubules of the renal medulla. Specific expression is seen in medullary and cortical thick ascending limbs; lower levels are detected in cortical and inner medullary collecting ducts. Not detected significantly in the glomeruli. In the brain, expressed in all types of glial cells.

It localises to the cell membrane. Its function is as follows. Receptor for prostaglandin E2 (PGE2). Required for normal development of fever in response to pyrinogens, including IL1B, prostaglandin E2 and bacterial lipopolysaccharide (LPS). Required for normal potentiation of platelet aggregation by prostaglandin E2, and thus plays a role in the regulation of blood coagulation. Required for increased HCO3(-) secretion in the duodenum in response to mucosal acidification, and thereby contributes to the protection of the mucosa against acid-induced ulceration. Not required for normal kidney function, normal urine volume and osmolality. In terms of biological role, receptor for prostaglandin E2 (PGE2); ligand binding activates a signaling cascade via G(i) proteins that leads to the inhibition of adenylate cyclase. Functionally, receptor for prostaglandin E2 (PGE2); ligand binding can activate several distinct signaling cascades, resulting in activation or inhibition of adenylate cyclase. The polypeptide is Prostaglandin E2 receptor EP3 subtype (Ptger3) (Rattus norvegicus (Rat)).